A 341-amino-acid chain; its full sequence is MALKIKIPETSQSSDEYSRWTVYHIEVAFPNGGKHVVFRRFNEFVALDAQIRPNDYNSRLCKLPSKSWVSSTVTNEKLRESRRLALQAYVQCLSETPWIKMPVVKKFLNIKDESEDETQGQFLGPTDWIQVFQDCKRNLHMYRVDLMSGKSITIGVQTKNVYAIKSLMDNLSESLDKLELANALGPGEILRRKDMLEQLGSEFLSFKRLVKNANSPVAPPSASSQLNSSNPSSPFRPLSASTDKQSNTSLNRVLGKNRMPETQTTKKLDNVGLYNMQNQTMEDQDMQAESLLPIIQRQKELSKMINQEVVEQNSMLDELSNEAYANQKKLHRTRAGLRKLG.

The PX domain maps to 1-115 (MALKIKIPET…KFLNIKDESE (115 aa)). Residues 214–233 (NSPVAPPSASSQLNSSNPSS) are compositionally biased toward low complexity. Residues 214-265 (NSPVAPPSASSQLNSSNPSSPFRPLSASTDKQSNTSLNRVLGKNRMPETQTT) form a disordered region. Positions 239 to 251 (SASTDKQSNTSLN) are enriched in polar residues. Residues 278–340 (NQTMEDQDMQ…HRTRAGLRKL (63 aa)) enclose the t-SNARE coiled-coil homology domain.

In terms of assembly, possibly multimeric.

The protein resides in the vacuole. Its function is as follows. Essential for proper morphogenesis of the vacuole. May exist as structural reinforcement on the surface of the vacuolar membrane and be required for maintenance against rupture by osmotic pressure. In Schizosaccharomyces pombe (strain 972 / ATCC 24843) (Fission yeast), this protein is Vacuolar morphogenesis protein 7 homolog.